Here is a 265-residue protein sequence, read N- to C-terminus: Metallo-beta-lactamase VIM-7 (265 aa).

Residues 1–17 (MFQIRSFLVGISAFVMA) form the signal peptide. Residues His113, His115, Asp117, His178, Cys197, and His239 each coordinate Zn(2+).

This sequence belongs to the metallo-beta-lactamase superfamily. Class-B beta-lactamase family. In terms of assembly, monomer. Zn(2+) serves as cofactor.

The protein localises to the periplasm. The enzyme catalyses a beta-lactam + H2O = a substituted beta-amino acid. Class B beta-lactamase which confers resistance to the beta-lactam antibiotics, including penicillins, cephalosporins and carbapenems. Acts via hydrolysis of the beta-lactam ring. Has penicillin-, cephalosporin- and carbapenem-hydrolyzing activities. This chain is Metallo-beta-lactamase VIM-7, found in Pseudomonas aeruginosa.